The sequence spans 219 residues: Probable nicotinate-nucleotide adenylyltransferase (219 aa).

It belongs to the NadD family.

The catalysed reaction is nicotinate beta-D-ribonucleotide + ATP + H(+) = deamido-NAD(+) + diphosphate. It participates in cofactor biosynthesis; NAD(+) biosynthesis; deamido-NAD(+) from nicotinate D-ribonucleotide: step 1/1. Catalyzes the reversible adenylation of nicotinate mononucleotide (NaMN) to nicotinic acid adenine dinucleotide (NaAD). The polypeptide is Probable nicotinate-nucleotide adenylyltransferase (Pseudomonas putida (strain GB-1)).